A 144-amino-acid chain; its full sequence is MESPLGSDLARLVRIWRALIDHRLKPLELTQTHWVTLHNIHQLPPDQSQIQLAKAIGIEQPSLVRTLDQLEDKGLISRQTCASDRRAKRIKLTEKADALIAEMEEVIHKTRGEILAGISSEEIELLIKLIAKLEHNIMELHSHD.

Residues 2 to 135 (ESPLGSDLAR…LIKLIAKLEH (134 aa)) form the HTH marR-type domain. The segment at residues 49-72 (QIQLAKAIGIEQPSLVRTLDQLED) is a DNA-binding region (H-T-H motif).

This sequence belongs to the SlyA family. Homodimer.

Its subcellular location is the cytoplasm. Functionally, transcription regulator that can specifically activate or repress expression of target genes. Required for virulence and survival in the macrophage environment. Probably activates the transcription of ssrB. Independently of ssrB activation, capable of stimulating the expression of virulence genes found on pathogenicity island 2 (SPI2). Probably activates expression of ispA, xseB genes, and of omp operon. This chain is Transcriptional regulator SlyA, found in Salmonella typhimurium (strain LT2 / SGSC1412 / ATCC 700720).